We begin with the raw amino-acid sequence, 132 residues long: Group 2 truncated hemoglobin YjbI (132 aa).

Heme is bound by residues Thr45, Lys48, Tyr63, and His76.

This sequence belongs to the truncated hemoglobin family. Group II subfamily. Monomer. Heme serves as cofactor.

Hemoglobin-like protein that exhibits a low peroxidase activity. Its very high oxygen affinity may rule out the possibility that it is involved in oxygen transport. In Bacillus subtilis (strain 168), this protein is Group 2 truncated hemoglobin YjbI (yjbI).